The chain runs to 87 residues: Small ribosomal subunit protein uS19m (87 aa).

The protein belongs to the universal ribosomal protein uS19 family.

The protein localises to the mitochondrion. In Dictyostelium citrinum (Slime mold), this protein is Small ribosomal subunit protein uS19m (mrps19).